We begin with the raw amino-acid sequence, 348 residues long: Histidinol-phosphate aminotransferase (348 aa).

N6-(pyridoxal phosphate)lysine is present on lysine 210.

Belongs to the class-II pyridoxal-phosphate-dependent aminotransferase family. Histidinol-phosphate aminotransferase subfamily. As to quaternary structure, homodimer. Requires pyridoxal 5'-phosphate as cofactor.

The enzyme catalyses L-histidinol phosphate + 2-oxoglutarate = 3-(imidazol-4-yl)-2-oxopropyl phosphate + L-glutamate. The protein operates within amino-acid biosynthesis; L-histidine biosynthesis; L-histidine from 5-phospho-alpha-D-ribose 1-diphosphate: step 7/9. The protein is Histidinol-phosphate aminotransferase of Pseudomonas putida (strain ATCC 47054 / DSM 6125 / CFBP 8728 / NCIMB 11950 / KT2440).